The chain runs to 409 residues: Argininosuccinate synthase (409 aa).

Residues 10-18 (AYSGGLDTS) and Ala-37 each bind ATP. L-citrulline is bound by residues Tyr-90 and Ser-95. Gly-120 contributes to the ATP binding site. L-aspartate is bound by residues Thr-122, Asn-126, and Asp-127. An L-citrulline-binding site is contributed by Asn-126. 5 residues coordinate L-citrulline: Arg-130, Ser-182, Ser-191, Glu-267, and Tyr-279.

It belongs to the argininosuccinate synthase family. Type 1 subfamily. In terms of assembly, homotetramer.

The protein localises to the cytoplasm. It carries out the reaction L-citrulline + L-aspartate + ATP = 2-(N(omega)-L-arginino)succinate + AMP + diphosphate + H(+). It functions in the pathway amino-acid biosynthesis; L-arginine biosynthesis; L-arginine from L-ornithine and carbamoyl phosphate: step 2/3. The protein is Argininosuccinate synthase of Azoarcus sp. (strain BH72).